The sequence spans 248 residues: Triosephosphate isomerase (248 aa).

Residue 9–11 (NWK) coordinates substrate. Catalysis depends on His94, which acts as the Electrophile. Glu166 functions as the Proton acceptor in the catalytic mechanism. Substrate contacts are provided by residues Gly172, Ser211, and 232–233 (GG).

It belongs to the triosephosphate isomerase family. Homodimer.

Its subcellular location is the cytoplasm. It catalyses the reaction D-glyceraldehyde 3-phosphate = dihydroxyacetone phosphate. It functions in the pathway carbohydrate biosynthesis; gluconeogenesis. The protein operates within carbohydrate degradation; glycolysis; D-glyceraldehyde 3-phosphate from glycerone phosphate: step 1/1. Functionally, involved in the gluconeogenesis. Catalyzes stereospecifically the conversion of dihydroxyacetone phosphate (DHAP) to D-glyceraldehyde-3-phosphate (G3P). This is Triosephosphate isomerase from Herminiimonas arsenicoxydans.